Reading from the N-terminus, the 267-residue chain is Tryptophan synthase alpha chain (267 aa).

Residues glutamate 49 and aspartate 60 each act as proton acceptor in the active site.

This sequence belongs to the TrpA family. Tetramer of two alpha and two beta chains.

It carries out the reaction (1S,2R)-1-C-(indol-3-yl)glycerol 3-phosphate + L-serine = D-glyceraldehyde 3-phosphate + L-tryptophan + H2O. It functions in the pathway amino-acid biosynthesis; L-tryptophan biosynthesis; L-tryptophan from chorismate: step 5/5. Its function is as follows. The alpha subunit is responsible for the aldol cleavage of indoleglycerol phosphate to indole and glyceraldehyde 3-phosphate. The protein is Tryptophan synthase alpha chain of Chloroflexus aggregans (strain MD-66 / DSM 9485).